The following is a 156-amino-acid chain: Small ribosomal subunit protein uS7 (156 aa).

It belongs to the universal ribosomal protein uS7 family. Part of the 30S ribosomal subunit. Contacts proteins S9 and S11.

Its function is as follows. One of the primary rRNA binding proteins, it binds directly to 16S rRNA where it nucleates assembly of the head domain of the 30S subunit. Is located at the subunit interface close to the decoding center, probably blocks exit of the E-site tRNA. In Clavibacter michiganensis subsp. michiganensis (strain NCPPB 382), this protein is Small ribosomal subunit protein uS7.